The sequence spans 447 residues: NADP-specific glutamate dehydrogenase (447 aa).

Positions 92, 113, and 116 each coordinate substrate. The Proton donor role is filled by Lys-128. Gly-167 lines the substrate pocket. The NADP(+) site is built by Thr-212 and Asn-243. Ser-379 serves as a coordination point for substrate.

This sequence belongs to the Glu/Leu/Phe/Val dehydrogenases family. Homohexamer.

The enzyme catalyses L-glutamate + NADP(+) + H2O = 2-oxoglutarate + NH4(+) + NADPH + H(+). Its function is as follows. Catalyzes the reversible oxidative deamination of glutamate to alpha-ketoglutarate and ammonia. The protein is NADP-specific glutamate dehydrogenase (gdh) of Corynebacterium efficiens (strain DSM 44549 / YS-314 / AJ 12310 / JCM 11189 / NBRC 100395).